A 1054-amino-acid polypeptide reads, in one-letter code: Carbamoyl phosphate synthase large chain (1054 aa).

A carboxyphosphate synthetic domain region spans residues 1–402 (MPRRDDIRSI…SLLKAMASLE (402 aa)). R129, R169, G175, G176, R208, V210, E215, G241, V242, H243, Q285, and E299 together coordinate ATP. The region spanning 133–328 (REAMERIGLR…IAKIAARLAV (196 aa)) is the ATP-grasp 1 domain. 3 residues coordinate Mg(2+): Q285, E299, and N301. Mn(2+)-binding residues include Q285, E299, and N301. Positions 403-531 (IETRDIQARL…YYYSTYEQED (129 aa)) are oligomerization domain. The interval 532–914 (EVERGENPSV…AFAKALAAAG (383 aa)) is carbamoyl phosphate synthetic domain. Residues 658–849 (GRLLRELGIP…LARLATRVLL (192 aa)) enclose the ATP-grasp 2 domain. ATP contacts are provided by R694, K733, E740, G765, V766, H767, S768, Q808, and E820. Residues Q808, E820, and N822 each coordinate Mg(2+). Residues Q808, E820, and N822 each contribute to the Mn(2+) site. The region spanning 915-1054 (QRLPESGRVY…SLQDLYAART (140 aa)) is the MGS-like domain. An allosteric domain region spans residues 915 to 1054 (QRLPESGRVY…SLQDLYAART (140 aa)).

The protein belongs to the CarB family. As to quaternary structure, composed of two chains; the small (or glutamine) chain promotes the hydrolysis of glutamine to ammonia, which is used by the large (or ammonia) chain to synthesize carbamoyl phosphate. Tetramer of heterodimers (alpha,beta)4. It depends on Mg(2+) as a cofactor. Requires Mn(2+) as cofactor.

It carries out the reaction hydrogencarbonate + L-glutamine + 2 ATP + H2O = carbamoyl phosphate + L-glutamate + 2 ADP + phosphate + 2 H(+). The catalysed reaction is hydrogencarbonate + NH4(+) + 2 ATP = carbamoyl phosphate + 2 ADP + phosphate + 2 H(+). It functions in the pathway amino-acid biosynthesis; L-arginine biosynthesis; carbamoyl phosphate from bicarbonate: step 1/1. It participates in pyrimidine metabolism; UMP biosynthesis via de novo pathway; (S)-dihydroorotate from bicarbonate: step 1/3. Its function is as follows. Large subunit of the glutamine-dependent carbamoyl phosphate synthetase (CPSase). CPSase catalyzes the formation of carbamoyl phosphate from the ammonia moiety of glutamine, carbonate, and phosphate donated by ATP, constituting the first step of 2 biosynthetic pathways, one leading to arginine and/or urea and the other to pyrimidine nucleotides. The large subunit (synthetase) binds the substrates ammonia (free or transferred from glutamine from the small subunit), hydrogencarbonate and ATP and carries out an ATP-coupled ligase reaction, activating hydrogencarbonate by forming carboxy phosphate which reacts with ammonia to form carbamoyl phosphate. This chain is Carbamoyl phosphate synthase large chain, found in Rubrobacter xylanophilus (strain DSM 9941 / JCM 11954 / NBRC 16129 / PRD-1).